The chain runs to 142 residues: Hemoglobin subunit alpha-A (142 aa).

The Globin domain occupies 2–142; the sequence is VLSANDKSNV…VGTVLTAKYR (141 aa). Histidine 59 lines the O2 pocket. Heme b is bound at residue histidine 88.

This sequence belongs to the globin family. In terms of assembly, heterotetramer of two alpha chains and two beta chains. Red blood cells.

In terms of biological role, involved in oxygen transport from the lung to the various peripheral tissues. This Columba livia (Rock dove) protein is Hemoglobin subunit alpha-A (HBAA).